The sequence spans 313 residues: Methionyl-tRNA formyltransferase (313 aa).

113 to 116 serves as a coordination point for (6S)-5,6,7,8-tetrahydrofolate; it reads SLLP.

The protein belongs to the Fmt family.

The catalysed reaction is L-methionyl-tRNA(fMet) + (6R)-10-formyltetrahydrofolate = N-formyl-L-methionyl-tRNA(fMet) + (6S)-5,6,7,8-tetrahydrofolate + H(+). Attaches a formyl group to the free amino group of methionyl-tRNA(fMet). The formyl group appears to play a dual role in the initiator identity of N-formylmethionyl-tRNA by promoting its recognition by IF2 and preventing the misappropriation of this tRNA by the elongation apparatus. This is Methionyl-tRNA formyltransferase from Francisella tularensis subsp. novicida (strain U112).